We begin with the raw amino-acid sequence, 225 residues long: AA9 family lytic polysaccharide monooxygenase A (225 aa).

The signal sequence occupies residues 1–17 (MLTTTFALLTAALGVSA). Residues His18 and His85 each contribute to the Cu(2+) site. 2 cysteine pairs are disulfide-bonded: Cys55–Cys173 and Cys143–Cys225. Residues His159 and Gln168 each coordinate O2. Tyr170 lines the Cu(2+) pocket.

This sequence belongs to the polysaccharide monooxygenase AA9 family. Requires Cu(2+) as cofactor.

The protein localises to the secreted. It catalyses the reaction [(1-&gt;4)-beta-D-glucosyl]n+m + reduced acceptor + O2 = 4-dehydro-beta-D-glucosyl-[(1-&gt;4)-beta-D-glucosyl]n-1 + [(1-&gt;4)-beta-D-glucosyl]m + acceptor + H2O.. Is able to utilize various natural phenolic compounds as reducing agents. Most of these reducing agents are present in plants, either free or as lignin building blocks, such as sinapic acid, or as flavonoids such as catechin and dopamine. Phenolic compounds with 1,2-benzenediol and 1,2,3-benzenetriol moieties yield the highest release of oxidized and non-oxidized glucooligosaccharides from cellulose compared to monophenols or sulfur-containing compounds. In terms of biological role, lytic polysaccharide monooxygenase (LPMO) that depolymerizes crystalline and amorphous polysaccharides via the oxidation of scissile alpha- or beta-(1-4)-glycosidic bonds, yielding C1 or C4 oxidation products. Catalysis by LPMOs requires the reduction of the active-site copper from Cu(II) to Cu(I) by a reducing agent and H(2)O(2) or O(2) as a cosubstrate. Shows oxidative cleavage of xylan in addition to cellulose. Shows a strong synergistic effect with endoglucanase I (EGI) with a 16-fold higher release of detected oligosaccharides. This is AA9 family lytic polysaccharide monooxygenase A from Thermothelomyces thermophilus (strain ATCC 42464 / BCRC 31852 / DSM 1799) (Sporotrichum thermophile).